A 116-amino-acid polypeptide reads, in one-letter code: Large ribosomal subunit protein bL19 (116 aa).

It belongs to the bacterial ribosomal protein bL19 family.

In terms of biological role, this protein is located at the 30S-50S ribosomal subunit interface and may play a role in the structure and function of the aminoacyl-tRNA binding site. This chain is Large ribosomal subunit protein bL19, found in Mycoplasma mobile (strain ATCC 43663 / 163K / NCTC 11711) (Mesomycoplasma mobile).